Reading from the N-terminus, the 439-residue chain is Glutamyl-tRNA reductase (439 aa).

Residues 48–51 (TCNR), serine 107, 112–114 (EPQ), and glutamine 118 contribute to the substrate site. Cysteine 49 (nucleophile) is an active-site residue. Residue 187 to 192 (GAGEMA) coordinates NADP(+).

This sequence belongs to the glutamyl-tRNA reductase family. Homodimer.

It carries out the reaction (S)-4-amino-5-oxopentanoate + tRNA(Glu) + NADP(+) = L-glutamyl-tRNA(Glu) + NADPH + H(+). It participates in porphyrin-containing compound metabolism; protoporphyrin-IX biosynthesis; 5-aminolevulinate from L-glutamyl-tRNA(Glu): step 1/2. In terms of biological role, catalyzes the NADPH-dependent reduction of glutamyl-tRNA(Glu) to glutamate 1-semialdehyde (GSA). The protein is Glutamyl-tRNA reductase of Maridesulfovibrio salexigens (strain ATCC 14822 / DSM 2638 / NCIMB 8403 / VKM B-1763) (Desulfovibrio salexigens).